We begin with the raw amino-acid sequence, 384 residues long: Putative F-box/kelch-repeat protein At3g27910 (384 aa).

In terms of domain architecture, F-box spans 27 to 79 (SPTSLPLPDEIIVNCFAYIPRCDYPSLSLVSKTFNRLITSIELNIVRSLFQRT). 4 Kelch repeats span residues 138-184 (KIYV…IVDG), 185-235 (KIYV…VMNK), 237-274 (IYIM…VIDN), and 275-323 (MLYT…MANH).

The polypeptide is Putative F-box/kelch-repeat protein At3g27910 (Arabidopsis thaliana (Mouse-ear cress)).